The chain runs to 164 residues: Disulfide bond formation protein B (164 aa).

Topologically, residues 1–9 (MTLPSARTC) are cytoplasmic. Residues 10-26 (FLLGFLFCAALLAAALY) traverse the membrane as a helical segment. Over 27-44 (FQFSGGLEPCPLCISQRI) the chain is Periplasmic. A disulfide bridge links Cys-36 with Cys-39. Residues 45–61 (MVLAVALVFLAAAIHHP) traverse the membrane as a helical segment. The Cytoplasmic segment spans residues 62–68 (ASLGIRA). A helical transmembrane segment spans residues 69–85 (YALLGTAVALGGASISG). Over 86-142 (RHVWLLHLPPEEVPECGPGLSYMFRNFPLGDTLKAMLSGTGDCAKVDWTFLGLSMPA) the chain is Periplasmic. Cys-101 and Cys-128 are oxidised to a cystine. A helical transmembrane segment spans residues 143–161 (WVLICFLGLGAFSLLQWWN). Residues 162 to 164 (AER) lie on the Cytoplasmic side of the membrane.

The protein belongs to the DsbB family.

It localises to the cell inner membrane. Required for disulfide bond formation in some periplasmic proteins. Acts by oxidizing the DsbA protein. The sequence is that of Disulfide bond formation protein B from Methylococcus capsulatus (strain ATCC 33009 / NCIMB 11132 / Bath).